Consider the following 92-residue polypeptide: Co-chaperonin GroES (92 aa).

Belongs to the GroES chaperonin family. As to quaternary structure, heptamer of 7 subunits arranged in a ring. Interacts with the chaperonin GroEL.

It localises to the cytoplasm. In terms of biological role, together with the chaperonin GroEL, plays an essential role in assisting protein folding. The GroEL-GroES system forms a nano-cage that allows encapsulation of the non-native substrate proteins and provides a physical environment optimized to promote and accelerate protein folding. GroES binds to the apical surface of the GroEL ring, thereby capping the opening of the GroEL channel. This is Co-chaperonin GroES from Methanosarcina barkeri (strain Fusaro / DSM 804).